The following is a 114-amino-acid chain: Kininogen-2 (114 aa).

The N-terminal stretch at 1–23 (MRLWFCLSFFIVLCLEHFPGTLA) is a signal peptide. Over residues 35 to 45 (TRLHGHHKPSR) the composition is skewed to basic residues. Residues 35 to 114 (TRLHGHHKPS…QIPGLGPLRG (80 aa)) are disordered. The span at 65 to 80 (PESEEKTEQFLRDLPK) shows a compositional bias: basic and acidic residues. Arg-113 carries the arginine amide modification.

Belongs to the bradykinin-related peptide family. Expressed by the skin glands.

It is found in the secreted. Functionally, potent vasodilator. Binds B1 (BDKRB1) and B2 (BDKRB2) bradykinin receptors. This is Kininogen-2 from Bombina maxima (Giant fire-bellied toad).